Reading from the N-terminus, the 494-residue chain is Neuronal pentraxin receptor (494 aa).

At 1–2 the chain is on the cytoplasmic side; sequence MK. The chain crosses the membrane as a helical; Signal-anchor for type II membrane protein span at residues 3 to 23; the sequence is FLAVLLAAGMLAFLGAVICII. Over 24 to 494 the chain is Extracellular; sequence ASVPLAASPA…FDVCKRRAKA (471 aa). Residues 37–80 are disordered; that stretch reads PGGTDNASAASAAGAPGPQRSLSALQGAGGSAGPSVLPGEPAAS. The N-linked (GlcNAc...) asparagine glycan is linked to Asn-42. 2 stretches are compositionally biased toward low complexity: residues 43 to 62 and 69 to 80; these read ASAA…SALQ and GPSVLPGEPAAS. N-linked (GlcNAc...) asparagine glycosylation is present at Asn-211. The 203-residue stretch at 286-488 folds into the Pentraxin (PTX) domain; that stretch reads DAFKVSIPIR…GAKKAAFDVC (203 aa). Cys-316 and Cys-377 are disulfide-bonded. Residues Asn-341, Glu-419, Gln-420, Asp-421, and Gln-431 each coordinate Ca(2+). Asn-457 is a glycosylation site (N-linked (GlcNAc...) asparagine).

As to quaternary structure, interacts with KLHL2. Heteropentamer with NPTX1 and/or NPTX2. Also binds taipoxin-associated calcium-binding protein 49 (TCBP49/RCN2). Requires Ca(2+) as cofactor. Post-translationally, N-glycosylated. Ubiquitinated by a cullin-RING-based BCR (BTB-CUL3-RBX1) E3 ubiquitin-protein ligase complex containing KLHL2. In terms of tissue distribution, brain specific.

The protein localises to the membrane. May be involved in mediating uptake of synaptic material during synapse remodeling or in mediating the synaptic clustering of AMPA glutamate receptors at a subset of excitatory synapses. In Rattus norvegicus (Rat), this protein is Neuronal pentraxin receptor (Nptxr).